A 62-amino-acid polypeptide reads, in one-letter code: Large ribosomal subunit protein bL28 (62 aa).

A disordered region spans residues Met-1–Lys-22.

This sequence belongs to the bacterial ribosomal protein bL28 family.

This chain is Large ribosomal subunit protein bL28, found in Sulfurimonas denitrificans (strain ATCC 33889 / DSM 1251) (Thiomicrospira denitrificans (strain ATCC 33889 / DSM 1251)).